A 725-amino-acid chain; its full sequence is NAD(+) hydrolase SARM1 (725 aa).

The transit peptide at 1–27 (MVLTILFSAYKLCRFFAMSSPRPGAER) directs the protein to the mitochondrion. Residues 60–100 (EVQGALERALPELQQALSALKQAGGGRAVGAGLAEVFQLVE) form an ARM 1 repeat. NAD(+)-binding positions include W103, R110, 149–158 (EQILVAENRR), and 191–194 (HMFK). ARM repeat units lie at residues 114 to 153 (QGLC…QILV), 155 to 194 (ENRR…HMFK), 197 to 236 (EETC…NCAM), 238 to 281 (GGQA…LATN), 282 to 315 (KEVE…CLVD), 316 to 355 (ASDT…AEAV), and 360 to 403 (KNRN…EEVP). SAM domains are found at residues 413–477 (WKEA…LKTF) and 483–549 (CDRS…MLHS). S549 and S559 each carry phosphoserine. One can recognise a TIR domain in the interval 561 to 704 (DVPDVFISYR…KIIRFLQGRS (144 aa)). Residues 570 to 571 (RR) and E600 each bind NAD(+). The active site involves E643. The disordered stretch occupies residues 705–725 (SRDSSAGSDTSLEGAAPMGPT).

It belongs to the SARM1 family. Homooctamer; forms an octameric ring via SAM domains. Interacts with TICAM1/TRIF and thereby interferes with TICAM1/TRIF function. Interacts with MAPK10/JNK3 and SDC2 (via cytoplasmic domain). Post-translationally, phosphorylation at Ser-549 by JNK kinases (MAPK8, MAPK9 and /or MAPK10) enhance the NAD(+) hydrolase (NADase) activity. Phosphorylation at Ser-549 and subsequent activation takes place in response to oxidative stress conditions and inhibits mitochondrial respiration. As to expression, highest expression seen in the spleen and the brain, followed by lung, kidney, liver and other tissues.

It is found in the cytoplasm. It localises to the cell projection. Its subcellular location is the axon. The protein resides in the dendrite. The protein localises to the synapse. It is found in the mitochondrion. It catalyses the reaction NAD(+) + H2O = ADP-D-ribose + nicotinamide + H(+). It carries out the reaction NAD(+) = cyclic ADP-beta-D-ribose + nicotinamide + H(+). The enzyme catalyses NADP(+) + H2O = ADP-D-ribose 2'-phosphate + nicotinamide + H(+). Autoinhibited: in the inactive state, the enzymatic TIR domain is held apart by the autoinhibiting ARM repeats. NAD(+)-binding to ARM repeats maintains an inactive state by promoting interaction between ARM repeats and the TIR domain, thereby facilitating inhibition of the enzymatic TIR domain. Following activation, possibly by nicotinamide mononucleotide (NMN), auto-inhibitory interactions are released, allowing self-association of the TIR domains and subsequent activation of the NAD(+) hydrolase (NADase) activity. Self-association of TIR domains is facilitated by the octamer of SAM domains. NAD(+) hydrolase, which plays a key role in axonal degeneration following injury by regulating NAD(+) metabolism. Acts as a negative regulator of MYD88- and TRIF-dependent toll-like receptor signaling pathway by promoting Wallerian degeneration, an injury-induced form of programmed subcellular death which involves degeneration of an axon distal to the injury site. Wallerian degeneration is triggered by NAD(+) depletion: in response to injury, SARM1 is activated and catalyzes cleavage of NAD(+) into ADP-D-ribose (ADPR), cyclic ADPR (cADPR) and nicotinamide; NAD(+) cleavage promoting cytoskeletal degradation and axon destruction. Also able to hydrolyze NADP(+), but not other NAD(+)-related molecules. Can activate neuronal cell death in response to stress. Regulates dendritic arborization through the MAPK4-JNK pathway. Involved in innate immune response: inhibits both TICAM1/TRIF- and MYD88-dependent activation of JUN/AP-1, TRIF-dependent activation of NF-kappa-B and IRF3, and the phosphorylation of MAPK14/p38. The protein is NAD(+) hydrolase SARM1 of Sus scrofa (Pig).